The primary structure comprises 245 residues: tRNA pseudouridine synthase A (245 aa).

The active-site Nucleophile is the D52. A substrate-binding site is contributed by Y111.

This sequence belongs to the tRNA pseudouridine synthase TruA family. Homodimer.

The enzyme catalyses uridine(38/39/40) in tRNA = pseudouridine(38/39/40) in tRNA. Functionally, formation of pseudouridine at positions 38, 39 and 40 in the anticodon stem and loop of transfer RNAs. This chain is tRNA pseudouridine synthase A, found in Rhodospirillum centenum (strain ATCC 51521 / SW).